Consider the following 336-residue polypeptide: Ketol-acid reductoisomerase (NADP(+)) 1 (336 aa).

In terms of domain architecture, KARI N-terminal Rossmann spans 2–181 (AKVYYEKDVT…GATRAGVLET (180 aa)). NADP(+)-binding positions include 25-28 (YGSQ), Arg48, Ser52, and 82-85 (DELQ). His107 is a catalytic residue. Gly133 is a binding site for NADP(+). The KARI C-terminal knotted domain occupies 182–327 (TFKEETETDL…RKLRGMMPFV (146 aa)). Mg(2+)-binding residues include Asp190, Glu194, Glu226, and Glu230. Position 251 (Ser251) interacts with substrate.

The protein belongs to the ketol-acid reductoisomerase family. The cofactor is Mg(2+).

The catalysed reaction is (2R)-2,3-dihydroxy-3-methylbutanoate + NADP(+) = (2S)-2-acetolactate + NADPH + H(+). It carries out the reaction (2R,3R)-2,3-dihydroxy-3-methylpentanoate + NADP(+) = (S)-2-ethyl-2-hydroxy-3-oxobutanoate + NADPH + H(+). The protein operates within amino-acid biosynthesis; L-isoleucine biosynthesis; L-isoleucine from 2-oxobutanoate: step 2/4. Its pathway is amino-acid biosynthesis; L-valine biosynthesis; L-valine from pyruvate: step 2/4. Involved in the biosynthesis of branched-chain amino acids (BCAA). Catalyzes an alkyl-migration followed by a ketol-acid reduction of (S)-2-acetolactate (S2AL) to yield (R)-2,3-dihydroxy-isovalerate. In the isomerase reaction, S2AL is rearranged via a Mg-dependent methyl migration to produce 3-hydroxy-3-methyl-2-ketobutyrate (HMKB). In the reductase reaction, this 2-ketoacid undergoes a metal-dependent reduction by NADPH to yield (R)-2,3-dihydroxy-isovalerate. This is Ketol-acid reductoisomerase (NADP(+)) 1 from Bacillus anthracis.